The chain runs to 350 residues: Probable poly-beta-1,6-N-acetyl-D-glucosamine export protein (350 aa).

10 consecutive transmembrane segments (helical) span residues 7-29 (ELVYLRAIICAIIIITHLLTQIT), 44-66 (FYIRNIVIFGTPCFIILSQLLTT), 79-101 (TRVKYILIPYILMGLFYSYSESL), 116-138 (LLGQWYGYFIVVIMQFFILSYII), 145-167 (LFNSKILLLLSFILQQSFLYYFT), 187-204 (IIFGWIFYFFLGAYMGYN), 211-233 (FLERYLVIMIVLAVATYFVFIAL), 243-262 (SFSYSLTPYNSIMFIVILGI), 269-291 (ILFNTIQMISAFSFFIYLLHPII), and 306-328 (TMVFLAISLLFILGLCIGVGMIL).

Belongs to the acyltransferase 3 family.

It localises to the cell membrane. Presumably involved in the export of the biofilm adhesin polysaccharide poly-beta-1,6-N-acetyl-D-glucosamine (PNAG, also referred to as PIA) across the cell membrane. The polypeptide is Probable poly-beta-1,6-N-acetyl-D-glucosamine export protein (icaC) (Staphylococcus aureus (strain Mu50 / ATCC 700699)).